The sequence spans 62 residues: MGMRMMFTVFLLVVLATAVLPVTLDRASDGRNAAANAKTPRLIAPFIRDYCCHRGPCMVWCG.

A signal peptide spans 1-18 (MGMRMMFTVFLLVVLATA). A propeptide spanning residues 19 to 48 (VLPVTLDRASDGRNAAANAKTPRLIAPFIR) is cleaved from the precursor. Disulfide bonds link cysteine 51/cysteine 57 and cysteine 52/cysteine 61. Residue cysteine 61 is modified to Cysteine amide.

This sequence belongs to the conotoxin A superfamily. Expressed by the venom duct.

The protein resides in the secreted. In terms of biological role, does not show activity on the acetylcholine receptors tested. This Conus bandanus (Banded marble cone) protein is Alpha-conotoxin-like Bn1.3.